Reading from the N-terminus, the 203-residue chain is Mpv17-like protein (203 aa).

Topologically, residues 1-12 are cytoplasmic; sequence MRILIQFTKRHP. A helical transmembrane segment spans residues 13–30; the sequence is WLTNVTIYGSLFASADIV. Residues 31–49 are Lumenal-facing; the sequence is QQKLSKSPTEPIDFKQTAK. Residues 50–69 traverse the membrane as a helical segment; it reads VGLVGFCFHANFNFFWLRFI. Residues 70–89 are Cytoplasmic-facing; the sequence is ERTFPGSAPLNVIRKVACDQ. The chain crosses the membrane as a helical span at residues 90–107; sequence LMAAPITISAFYTGLSLL. Residues 108–143 are Lumenal-facing; it reads DGERDVFKNLKEKFWPTYKTGVMCWTVFQTINFSVI. Residues 144–166 traverse the membrane as a helical segment; the sequence is PPFVRTAYIGVCAFLWTTFLCYI. The Cytoplasmic segment spans residues 167–203; that stretch reads RNRDINEVTTRLLHAVPNIRGKMAFPQDQDDNKPADK.

The protein belongs to the peroxisomal membrane protein PXMP2/4 family.

The protein localises to the peroxisome membrane. Functionally, participates in reactive oxygen species metabolism by up- or down-regulation of the genes of antioxidant enzymes. Protective against the mitochondrial apoptotic cascade. The polypeptide is Mpv17-like protein (mpv17l) (Xenopus laevis (African clawed frog)).